Reading from the N-terminus, the 467-residue chain is Neutral protease 2 homolog NFIA_031120 (467 aa).

A signal peptide spans 1–19 (MKITALASAILAVVHGALA). A propeptide spanning residues 20–172 (LPARAPALDI…PASIKPLDRR (153 aa)) is cleaved from the precursor. 2 disulfides stabilise this stretch: Cys179/Cys251 and Cys258/Cys276. His300 contributes to the Zn(2+) binding site. Glu301 is an active-site residue. Zn(2+) contacts are provided by His304 and Asp315. A compositionally biased stretch (polar residues) spans 359 to 451 (WDGNSQPGQT…TMWDGSSEPG (93 aa)). The segment at 359–467 (WDGNSQPGQT…HTTWGNFYQA (109 aa)) is disordered.

The protein belongs to the peptidase M35 family. It depends on Zn(2+) as a cofactor.

Its subcellular location is the secreted. The enzyme catalyses Preferential cleavage of bonds with hydrophobic residues in P1'. Also 3-Asn-|-Gln-4 and 8-Gly-|-Ser-9 bonds in insulin B chain.. In terms of biological role, secreted metalloproteinase that allows assimilation of proteinaceous substrates. Shows high activities on basic nuclear substrates such as histone and protamine. This is Neutral protease 2 homolog NFIA_031120 from Neosartorya fischeri (strain ATCC 1020 / DSM 3700 / CBS 544.65 / FGSC A1164 / JCM 1740 / NRRL 181 / WB 181) (Aspergillus fischerianus).